Reading from the N-terminus, the 541-residue chain is Chaperonin GroEL (541 aa).

ATP is bound by residues 29–32 (TLGP), 86–90 (DGTTT), glycine 413, 478–480 (NAL), and aspartate 494.

The protein belongs to the chaperonin (HSP60) family. Forms a cylinder of 14 subunits composed of two heptameric rings stacked back-to-back. Interacts with the co-chaperonin GroES.

The protein localises to the cytoplasm. The enzyme catalyses ATP + H2O + a folded polypeptide = ADP + phosphate + an unfolded polypeptide.. In terms of biological role, together with its co-chaperonin GroES, plays an essential role in assisting protein folding. The GroEL-GroES system forms a nano-cage that allows encapsulation of the non-native substrate proteins and provides a physical environment optimized to promote and accelerate protein folding. In Lachnoclostridium phytofermentans (strain ATCC 700394 / DSM 18823 / ISDg) (Clostridium phytofermentans), this protein is Chaperonin GroEL.